The primary structure comprises 868 residues: Translation initiation factor IF-2 (868 aa).

2 disordered regions span residues 49-72 and 92-276; these read LSKQ…TSTL and KRSD…EHLK. The span at 92–240 shows a compositional bias: basic and acidic residues; sequence KRSDIEEQQR…KKAEAEEVHL (149 aa). The region spanning 368 to 537 is the tr-type G domain; that stretch reads SRAPVVTIMG…VLQSELLDLQ (170 aa). The segment at 377–384 is G1; it reads GHVDHGKT. Residue 377 to 384 participates in GTP binding; it reads GHVDHGKT. The G2 stretch occupies residues 402-406; it reads GITQH. A G3 region spans residues 423–426; the sequence is DTPG. GTP contacts are provided by residues 423-427 and 477-480; these read DTPGH and NKMD. The tract at residues 477-480 is G4; sequence NKMD. Residues 513 to 515 form a G5 region; sequence SAK.

The protein belongs to the TRAFAC class translation factor GTPase superfamily. Classic translation factor GTPase family. IF-2 subfamily.

The protein resides in the cytoplasm. One of the essential components for the initiation of protein synthesis. Protects formylmethionyl-tRNA from spontaneous hydrolysis and promotes its binding to the 30S ribosomal subunits. Also involved in the hydrolysis of GTP during the formation of the 70S ribosomal complex. This is Translation initiation factor IF-2 from Alteromonas mediterranea (strain DSM 17117 / CIP 110805 / LMG 28347 / Deep ecotype).